A 283-amino-acid polypeptide reads, in one-letter code: Phosphatidylglycerol--prolipoprotein diacylglyceryl transferase (283 aa).

The next 4 membrane-spanning stretches (helical) occupy residues 17 to 37, 56 to 76, 92 to 112, and 117 to 137; these read LAVR…TFLG, FLTW…VLFY, WEGG…IWLF, and GIGF…GLAS. Residue Arg-139 participates in a 1,2-diacyl-sn-glycero-3-phospho-(1'-sn-glycerol) binding. 3 consecutive transmembrane segments (helical) span residues 194 to 214, 222 to 242, and 255 to 275; these read PSQL…VWLF, GQVA…AEFA, and GLSM…VGFV.

This sequence belongs to the Lgt family.

The protein resides in the cell inner membrane. The catalysed reaction is L-cysteinyl-[prolipoprotein] + a 1,2-diacyl-sn-glycero-3-phospho-(1'-sn-glycerol) = an S-1,2-diacyl-sn-glyceryl-L-cysteinyl-[prolipoprotein] + sn-glycerol 1-phosphate + H(+). The protein operates within protein modification; lipoprotein biosynthesis (diacylglyceryl transfer). In terms of biological role, catalyzes the transfer of the diacylglyceryl group from phosphatidylglycerol to the sulfhydryl group of the N-terminal cysteine of a prolipoprotein, the first step in the formation of mature lipoproteins. The protein is Phosphatidylglycerol--prolipoprotein diacylglyceryl transferase of Neisseria meningitidis serogroup C (strain 053442).